The chain runs to 179 residues: Large ribosomal subunit protein uL6 (179 aa).

It belongs to the universal ribosomal protein uL6 family. In terms of assembly, part of the 50S ribosomal subunit.

Functionally, this protein binds to the 23S rRNA, and is important in its secondary structure. It is located near the subunit interface in the base of the L7/L12 stalk, and near the tRNA binding site of the peptidyltransferase center. The chain is Large ribosomal subunit protein uL6 from Solidesulfovibrio magneticus (strain ATCC 700980 / DSM 13731 / RS-1) (Desulfovibrio magneticus).